A 122-amino-acid polypeptide reads, in one-letter code: Large ribosomal subunit protein uL14c (122 aa).

It belongs to the universal ribosomal protein uL14 family. Part of the 50S ribosomal subunit.

The protein localises to the plastid. It localises to the chloroplast. Functionally, binds to 23S rRNA. This is Large ribosomal subunit protein uL14c from Gnetum parvifolium (Small-leaved jointfir).